Here is a 647-residue protein sequence, read N- to C-terminus: Protein cueball (647 aa).

Residues 1–22 (MLWCPSVLVPLIAVAACLPVLA) form the signal peptide. Topologically, residues 23 to 534 (IGTPLEWEFA…CMTPSPWTSN (512 aa)) are extracellular. N-linked (GlcNAc...) asparagine glycosylation is found at Asn80 and Asn106. LDL-receptor class B repeat units lie at residues 119–166 (RNLF…DVCR), 167–211 (RKLY…DQLS), and 212–257 (DRIF…TNDA). The N-linked (GlcNAc...) asparagine glycan is linked to Asn175. N-linked (GlcNAc...) asparagine glycosylation is present at Asn316. EGF-like domains are found at residues 365-401 (DEKT…SRCE) and 436-473 (EISK…ERCE). Cystine bridges form between Cys376–Cys389, Cys391–Cys400, Cys440–Cys450, Cys444–Cys461, and Cys463–Cys472. Asn475 is a glycosylation site (N-linked (GlcNAc...) asparagine). Residues 535 to 555 (VIIVLVLGIVSCFFLVAVIVH) traverse the membrane as a helical segment. Topologically, residues 556–647 (GFRRLYKPKR…LIHNMDDDLY (92 aa)) are cytoplasmic.

This sequence belongs to the cueball family.

It localises to the cell membrane. Functionally, has a role in spermatogenesis and oogenesis. The polypeptide is Protein cueball (Drosophila persimilis (Fruit fly)).